An 891-amino-acid polypeptide reads, in one-letter code: DNA mismatch repair protein MutS (891 aa).

646 to 653 (GPNMAGKS) contacts ATP.

It belongs to the DNA mismatch repair MutS family.

Its function is as follows. This protein is involved in the repair of mismatches in DNA. It is possible that it carries out the mismatch recognition step. This protein has a weak ATPase activity. This chain is DNA mismatch repair protein MutS, found in Rickettsia massiliae (strain Mtu5).